We begin with the raw amino-acid sequence, 566 residues long: MTILPKKKPPPPDADPANEPPPPGPLPPAPRRGAGVGVGGGGTGVGGGERDRDSGVVGARPRASPPPQGPLPGPPGALHRWALAVPPGAVAGPRPQQASPPPCGGPGGPGGGPGDALGATTAGVGAAGVVVGVGGTVGVGGCCSGPGHSKRRRQAPGVGAVGGASPEREEVGAGYNSEDEYEAAAARIEAMDPATVEQQEHWFEKALRDKKGFIIKQMKEDGACLFRAVADQVYGDQDMHEVVRKHCMDYLMKNADYFSNYVTEDFTTYINRKRKNNCHGNHIEMQAMAEMYNRPVEVYQYSTEPINTFHGIHQNEDEPIRVSYHRNIHYNSVVNPNKATIGVGLGLPSFKPGFAEQSLMKNAIKTSEESWIEQQMLEDKKRATDWEATNEAIEEQVARESYLQWLRDQEKQARQVRGPSQPRKASATCSSATAAASSGLEEWTSRSPRQRSSASSPEHPELHAELGIKPPSPGTVLALAKPPSPCAPGTSSQFSAGGDRATSPLVSLYPALECRALIQQMSPSAFGLNDWDDDEILASVLAVSQQEYLDSMKKNKVHREPPPDKS.

Disordered stretches follow at residues 1–117 (MTIL…GDAL) and 145–175 (GPGH…GAGY). A compositionally biased stretch (pro residues) spans 11-30 (PPDADPANEPPPPGPLPPAP). Residues 34 to 47 (AGVGVGGGGTGVGG) are compositionally biased toward gly residues. The segment covering 63 to 75 (ASPPPQGPLPGPP) has biased composition (pro residues). Serine 64 is subject to Phosphoserine. The segment covering 84 to 97 (AVPPGAVAGPRPQQ) has biased composition (low complexity). Positions 105 to 115 (GPGGPGGGPGD) are enriched in gly residues. Serine 165 is subject to Phosphoserine. Tyrosine 175 carries the post-translational modification Phosphotyrosine. Position 177 is a phosphoserine (serine 177). Threonine 195 is modified (phosphothreonine). One can recognise an OTU domain in the interval 213-336 (FIIKQMKEDG…NIHYNSVVNP (124 aa)). Residues 218-224 (MKEDGAC) form a cys-loop region. Aspartate 221 is a catalytic residue. Cysteine 224 serves as the catalytic Nucleophile. The interval 273 to 283 (KRKNNCHGNHI) is variable-loop. Serine 323 is modified (phosphoserine). Positions 324 to 329 (YHRNIH) are his-loop. Histidine 329 is an active-site residue. A phosphoserine mark is found at serine 332 and serine 370. Residues 413–499 (ARQVRGPSQP…TSSQFSAGGD (87 aa)) form a disordered region. 2 stretches are compositionally biased toward low complexity: residues 425–438 (ASAT…AASS) and 445–457 (SRSP…ASSP). A Phosphoserine modification is found at serine 447. Residue threonine 502 is modified to Phosphothreonine. Position 503 is a phosphoserine (serine 503).

The protein belongs to the peptidase C85 family. In terms of assembly, interacts with TRAF3. In terms of processing, phosphorylation at Ser-177 is required for deubiquitinating activity. Phosphorylation at Ser-323, Ser-332 and Ser-503 by MTOR promotes its activity.

Its subcellular location is the nucleus. It carries out the reaction Thiol-dependent hydrolysis of ester, thioester, amide, peptide and isopeptide bonds formed by the C-terminal Gly of ubiquitin (a 76-residue protein attached to proteins as an intracellular targeting signal).. Its activity is regulated as follows. Inhibited by N-ethyl-maleimide (NEM). In terms of biological role, deubiquitinating enzyme that functions as a negative regulator of the innate immune system. Has peptidase activity towards 'Lys-48'- and 'Lys-63'-linked polyubiquitin chains. Can also cleave 'Lys-11'-linked ubiquitin chains (in vitro). Acts via TRAF3 deubiquitination and subsequent suppression of type I interferon (IFN) production. Controls neuroectodermal differentiation through cleaving 'Lys-48'-linked ubiquitin chains to counteract degradation of select chromatin regulators such as ARID1A, HDAC2 and HCF1. Acts as a positive regulator of mTORC1 and mTORC2 signaling following phosphorylation by MTOR: acts by mediating deubiquitination of BTRC, leading to its stability. In Mus musculus (Mouse), this protein is OTU domain-containing protein 5.